Here is a 210-residue protein sequence, read N- to C-terminus: T-cell surface glycoprotein CD8 beta chain (210 aa).

An N-terminal signal peptide occupies residues 1–21; sequence MRPRLWLLLAAQLAVLHGSSV. The region spanning 22–132 is the Ig-like V-type domain; sequence LQQTPAYIKV…ELTFGKGTQL (111 aa). Over 22-170 the chain is Extracellular; the sequence is LQQTPAYIKV…ETQKGPLCSP (149 aa). A disulfide bridge links Cys41 with Cys116. Asn102 is a glycosylation site (N-linked (GlcNAc...) asparagine). The helical transmembrane segment at 171–191 threads the bilayer; it reads ITLGLLVAGVLVLLVSLGVAI. The Cytoplasmic portion of the chain corresponds to 192 to 210; the sequence is HLCCRRRRARLRFMKQFYK.

As to quaternary structure, forms disulfide-linked heterodimers with CD8A at the cell surface. Interacts with CD3D; this interaction couples TCR-CD3 with CD8. Interacts with LCK. Phosphorylated as a consequence of T-cell activation. In terms of processing, palmitoylated at the cytoplasmic tail and thereby targets the heterodimer CD8A/CD8B to lipid rafts unlike CD8A homodimers.

Its subcellular location is the cell membrane. Integral membrane glycoprotein that plays an essential role in the immune response and serves multiple functions in responses against both external and internal offenses. In T-cells, functions primarily as a coreceptor for MHC class I molecule:peptide complex. The antigens presented by class I peptides are derived from cytosolic proteins while class II derived from extracellular proteins. Interacts simultaneously with the T-cell receptor (TCR) and the MHC class I proteins presented by antigen presenting cells (APCs). In turn, recruits the Src kinase LCK to the vicinity of the TCR-CD3 complex. A palmitoylation site in the cytoplasmic tail of CD8B chain contributes to partitioning of CD8 into the plasma membrane lipid rafts where signaling proteins are enriched. Once LCK recruited, it initiates different intracellular signaling pathways by phosphorylating various substrates ultimately leading to lymphokine production, motility, adhesion and activation of cytotoxic T-lymphocytes (CTLs). Additionally, plays a critical role in thymic selection of CD8+ T-cells. The chain is T-cell surface glycoprotein CD8 beta chain (CD8B) from Pongo pygmaeus (Bornean orangutan).